We begin with the raw amino-acid sequence, 219 residues long: Protein matrimony (219 aa).

The span at Pro74–Gln99 shows a compositional bias: basic residues. Residues Pro74 to Pro104 are disordered. The SAM domain maps to Asn159–Leu219.

Interacts with polo. Interacts with cort. Post-translationally, probably ubiquitinated: degraded during the oocyte-to-embryo transition by the anaphase promoting complex/cyclosome (APC/C) containing cort protein.

It is found in the nucleus. It localises to the chromosome. Polo kinase inhibitor required to maintain G2 arrest in the meiotic cell cycle in females. Holds heterochromatically paired homologs together from the end of pachytene until metaphase I. Haploinsufficient locus for homologous achiasmate segregation and may be required for the maintenance of heterochromatic pairings. In Drosophila yakuba (Fruit fly), this protein is Protein matrimony (mtrm).